A 213-amino-acid polypeptide reads, in one-letter code: uncharacterized protein (213 aa).

Catalysis depends on charge relay system residues S114, D162, and H194.

The protein belongs to the AB hydrolase superfamily. AB hydrolase 2 family.

This is an uncharacterized protein from Rickettsia bellii (strain RML369-C).